The chain runs to 813 residues: Ubiquitin carboxyl-terminal hydrolase 45 (813 aa).

Basic and acidic residues predominate over residues 1 to 14 (MRVKDPSKDLPEKG). Positions 1–27 (MRVKDPSKDLPEKGKRNKRPLLPHDED) are disordered. The tract at residues 1–62 (MRVKDPSKDL…AVAESLWSVC (62 aa)) is interaction with ERCC1. Ser28 and Ser29 each carry phosphoserine. The UBP-type zinc-finger motif lies at 36 to 153 (LTCQHVSYAV…AQIVDFLQKH (118 aa)). Cys38, His40, Cys62, Cys65, Cys85, Cys88, Cys93, His101, His105, His114, Cys127, and Cys130 together coordinate Zn(2+). Residues 191-812 (KGITNLGNTC…QAYLLFYERI (622 aa)) enclose the USP domain. Residue Cys200 is the Nucleophile of the active site. 2 stretches are compositionally biased toward basic and acidic residues: residues 405 to 414 (LQETDQDHNK) and 450 to 466 (WPSE…KNDN). Residues 405–552 (LQETDQDHNK…QAKETHGGEE (148 aa)) are disordered. A compositionally biased stretch (polar residues) spans 472-488 (PASTLSTEASLNESLTD). A phosphoserine mark is found at Ser507 and Ser525. The segment covering 521–533 (SRGDSCGHAEQHP) has biased composition (basic and acidic residues). Catalysis depends on His745, which acts as the Proton acceptor.

It belongs to the peptidase C19 family. In terms of assembly, interacts with ERCC1. The catalytically active form interacts with SPDL1. In terms of tissue distribution, retina.

The protein localises to the photoreceptor inner segment. It localises to the cytoplasm. It is found in the nucleus. The catalysed reaction is Thiol-dependent hydrolysis of ester, thioester, amide, peptide and isopeptide bonds formed by the C-terminal Gly of ubiquitin (a 76-residue protein attached to proteins as an intracellular targeting signal).. Catalyzes the deubiquitination of SPDL1. Plays a role in the repair of UV-induced DNA damage via deubiquitination of ERCC1, promoting its recruitment to DNA damage sites. May be involved in the maintenance of photoreceptor function. May play a role in normal retinal development. Plays a role in cell migration. This Mus musculus (Mouse) protein is Ubiquitin carboxyl-terminal hydrolase 45 (Usp45).